Here is a 430-residue protein sequence, read N- to C-terminus: tRNA(Ile)-lysidine synthase (430 aa).

S24–S29 lines the ATP pocket.

Belongs to the tRNA(Ile)-lysidine synthase family.

The protein localises to the cytoplasm. It carries out the reaction cytidine(34) in tRNA(Ile2) + L-lysine + ATP = lysidine(34) in tRNA(Ile2) + AMP + diphosphate + H(+). Functionally, ligates lysine onto the cytidine present at position 34 of the AUA codon-specific tRNA(Ile) that contains the anticodon CAU, in an ATP-dependent manner. Cytidine is converted to lysidine, thus changing the amino acid specificity of the tRNA from methionine to isoleucine. The chain is tRNA(Ile)-lysidine synthase from Haemophilus influenzae (strain PittEE).